A 107-amino-acid polypeptide reads, in one-letter code: UPF0102 protein Tlet_0667 (107 aa).

The protein belongs to the UPF0102 family.

This chain is UPF0102 protein Tlet_0667, found in Pseudothermotoga lettingae (strain ATCC BAA-301 / DSM 14385 / NBRC 107922 / TMO) (Thermotoga lettingae).